Here is a 370-residue protein sequence, read N- to C-terminus: GTPase Obg (370 aa).

In terms of domain architecture, Obg spans 1 to 159 (MKFVDEAYID…KKLKLELRVL (159 aa)). In terms of domain architecture, OBG-type G spans 160-333 (ADVGLLGMPN…LVQAIYQHVA (174 aa)). Residues 166-173 (GMPNAGKS), 191-195 (FTTLH), 213-216 (DVPG), 283-286 (NKLD), and 314-316 (SAL) contribute to the GTP site. Positions 173 and 193 each coordinate Mg(2+). Positions 346–370 (FAEPEADESDDEPRFAPQADDPRFR) are disordered.

This sequence belongs to the TRAFAC class OBG-HflX-like GTPase superfamily. OBG GTPase family. As to quaternary structure, monomer. Requires Mg(2+) as cofactor.

Its subcellular location is the cytoplasm. An essential GTPase which binds GTP, GDP and possibly (p)ppGpp with moderate affinity, with high nucleotide exchange rates and a fairly low GTP hydrolysis rate. Plays a role in control of the cell cycle, stress response, ribosome biogenesis and in those bacteria that undergo differentiation, in morphogenesis control. This Methylibium petroleiphilum (strain ATCC BAA-1232 / LMG 22953 / PM1) protein is GTPase Obg.